Consider the following 259-residue polypeptide: DNA-directed RNA polymerase 30 kDa polypeptide (259 aa).

The TFIIS-type zinc-finger motif lies at 155–195 (YNTPCPNCKSRNTTPMMIQTRAADEPPLVRHACRDCKQHFK). Positions 159, 162, 187, and 190 each coordinate Zn(2+). Positions 220-259 (EILPDNNPSPPESPEPASPIDDGLIRVTFDRNDEPPEDDE) are disordered. Positions 226-236 (NPSPPESPEPA) are enriched in pro residues.

It belongs to the poxviridae DNA-directed RNA polymerase 30 kDa subunit family. As to quaternary structure, the DNA-dependent RNA polymerase (vRNAP) consists of eight subunits encoded by early viral genes and termed according to their apparent molecular masses Rpo147, Rpo132, Rpo35, Rpo30, Rpo22, Rpo19, Rpo18, and Rpo7. The same holoenzyme, with the addition of the transcription-specificity factor RAP94, is used for early gene expression.

It localises to the virion. The protein resides in the host cytoplasm. The enzyme catalyses RNA(n) + a ribonucleoside 5'-triphosphate = RNA(n+1) + diphosphate. Part of the DNA-dependent RNA polymerase which catalyzes the transcription of viral DNA into RNA using the four ribonucleoside triphosphates as substrates. Responsible for the transcription of early, intermediate and late genes. DNA-dependent RNA polymerase associates with the early transcription factor (ETF), itself composed of OPG118 and OPG134, thereby allowing the early genes transcription. Late transcription, and probably also intermediate transcription, require newly synthesized RNA polymerase. The sequence is that of DNA-directed RNA polymerase 30 kDa polypeptide (OPG066) from Variola virus (isolate Human/India/Ind3/1967) (VARV).